The chain runs to 1093 residues: Fused isobutyryl-CoA mutase (1093 aa).

The disordered stretch occupies residues 1 to 20 (MTDLSDVSRTAAAKPPAVPG). The B12-binding domain maps to 26–156 (KVRFVTAASL…AGMITDMAQR (131 aa)). Residue His-39 coordinates adenosylcob(III)alamin. The tract at residues 169–417 (LDTVVAGDRR…YQGLVGALGA (249 aa)) is GTPase chaperone MeaI. 219–224 (GAGKSS) contributes to the GTP binding site. Ser-223, Ile-248, Asp-249, and Asp-262 together coordinate Mg(2+). Arg-265 serves as a coordination point for GTP. 2 residues coordinate Mg(2+): Glu-310 and Thr-311. 357–360 (NKFD) is a GTP binding site. The segment at 418-579 (RGMSLKPGTL…MRENVPGSFP (162 aa)) is linker. Positions 587, 622, 728, 772, 821, 856, and 861 each coordinate substrate. Positions 973 and 1092 each coordinate GTP.

It belongs to the IcmF family. In terms of assembly, homodimer. The cofactor is adenosylcob(III)alamin. Mg(2+) is required as a cofactor.

The enzyme catalyses 2-methylpropanoyl-CoA = butanoyl-CoA. It catalyses the reaction 3-methylbutanoyl-CoA = 2,2-dimethylpropanoyl-CoA. The catalysed reaction is GTP + H2O = GDP + phosphate + H(+). Its activity is regulated as follows. Is prone to inactivation during catalytic turnover due to the occasional loss of the 5'-deoxyadenosine moiety and formation of the inactive cob(II)alamin cofactor in its active site. The GTPase activity of IcmF powers the ejection of the inactive cofactor and requires the presence of an acceptor protein, adenosyltransferase (ATR), for receiving it. ATR, in turn, catalyzes an adenosylation reaction converting cob(II)alamin in the presence of ATP and a reductant to the active AdoCbl cofactor. The repaired cofactor is then reloaded onto IcmF in a GTPase-gated step, regenerating active enzyme. The GTPase activity of IcmF is significantly decreased in the presence of excess of AdoCbl or cob(II)alamin and is higher in the apoenzyme state, indicating that the G-domain senses the presence and identity of the cofactor in the mutase active site. Its function is as follows. Catalyzes the reversible interconversion of isobutyryl-CoA and n-butyryl-CoA, and to a much lesser extent, of pivalyl-CoA and isovaleryl-CoA, using radical chemistry. Also exhibits GTPase activity, associated with its G-protein domain (MeaI) that functions as a chaperone that assists cofactor delivery and proper holo-enzyme assembly. The G-domain of IcmF also has a role in its cofactor repair. Does not display ATPase activity. The chain is Fused isobutyryl-CoA mutase from Cupriavidus metallidurans (strain ATCC 43123 / DSM 2839 / NBRC 102507 / CH34) (Ralstonia metallidurans).